The sequence spans 424 residues: MSRRSGRLQSRQDNQPLTECISDENNLPMCTRKRKTREQDTTGVSKAEEVQRRRQQFTIENRWVPISESSSIETSLLVPMQTKEPSTPSEELMDTANWVTFRNLFPAHVSDRASPIPLLHWDDLPEVWTIMTRKEALCPRKHDCLKSHPSLGERMRAILLDWLIEVCEVYRLHRESFYLAADFVDRYLAAKENVPKTKLQLIGITSLFVAAKLEEIYPPKLHEFAYVTDGACTDDQILDQELIMLMTLNWDLTPITVNTWLNAFMQICNAEEIANRKTNFHFPSYSSTEFVQVAQLLDVCTLDIGSMDFDYSILAASALYHVTNEEVTLSVTGLKWDDIAACVQWMSTFAMTIREVGVAQLKNFKNIYAGDAHNIQTHCSSLELLDKSHEKQRLLREASCCSPVQVPGVLTPPQSDKKSKKGVL.

The tract at residues 1 to 25 (MSRRSGRLQSRQDNQPLTECISDEN) is disordered. The span at 7–17 (RLQSRQDNQPL) shows a compositional bias: polar residues. Thr-411 carries the post-translational modification Phosphothreonine.

The protein belongs to the cyclin family. Cyclin E subfamily. Interacts with a member of the CDK2/CDK protein kinases to form a serine/threonine kinase holoenzyme complex. The cyclin subunit imparts substrate specificity to the complex.

Its subcellular location is the nucleus. In terms of biological role, essential for the control of the cell cycle at the G1/S (start) transition. The polypeptide is G1/S-specific cyclin-E (CYCE) (Hemicentrotus pulcherrimus (Sea urchin)).